A 511-amino-acid chain; its full sequence is Apolipoprotein N-acyltransferase (511 aa).

6 consecutive transmembrane segments (helical) span residues 24 to 44 (LALA…LLYL), 58 to 78 (GWWY…VSIH), 90 to 110 (FLML…AWLW), 125 to 145 (LAFA…LTGF), 163 to 183 (VPVG…ALLV), and 192 to 212 (GASL…GLYL). In terms of domain architecture, CN hydrolase spans 230–470 (IQGNIAQELK…QGILRGEVIP (241 aa)). Glu269 acts as the Proton acceptor in catalysis. The active site involves Lys330. The Nucleophile role is filled by Cys382. The helical transmembrane segment at 482–502 (VWPLAGLAGVLLLWALLGRQL) threads the bilayer.

Belongs to the CN hydrolase family. Apolipoprotein N-acyltransferase subfamily.

It is found in the cell inner membrane. It carries out the reaction N-terminal S-1,2-diacyl-sn-glyceryl-L-cysteinyl-[lipoprotein] + a glycerophospholipid = N-acyl-S-1,2-diacyl-sn-glyceryl-L-cysteinyl-[lipoprotein] + a 2-acyl-sn-glycero-3-phospholipid + H(+). The protein operates within protein modification; lipoprotein biosynthesis (N-acyl transfer). In terms of biological role, catalyzes the phospholipid dependent N-acylation of the N-terminal cysteine of apolipoprotein, the last step in lipoprotein maturation. This Pseudomonas aeruginosa (strain UCBPP-PA14) protein is Apolipoprotein N-acyltransferase.